The primary structure comprises 186 residues: Ribosome-recycling factor (186 aa).

It belongs to the RRF family.

It is found in the cytoplasm. In terms of biological role, responsible for the release of ribosomes from messenger RNA at the termination of protein biosynthesis. May increase the efficiency of translation by recycling ribosomes from one round of translation to another. In Chlorobaculum tepidum (strain ATCC 49652 / DSM 12025 / NBRC 103806 / TLS) (Chlorobium tepidum), this protein is Ribosome-recycling factor.